The following is a 2493-amino-acid chain: Adenylate cyclase (2493 aa).

5 stretches are compositionally biased toward polar residues: residues 1–18, 42–51, 60–78, 129–147, and 197–210; these read MLFT…SPEQ, RDSNGSSNFT, SQQY…QPDI, PANS…SISP, and APFS…TSVN. Disordered regions lie at residues 1–85, 99–148, 197–325, 355–444, 475–565, 616–660, 753–832, 854–882, and 904–967; these read MLFT…SSTL, FEHA…ISPS, APFS…SSLS, NSPS…QSQS, GSIT…VNML, QAPV…KTSY, NVGE…GSKS, ALVQ…GAGA, and RPSK…ATGT. Over residues 211 to 233 the composition is skewed to low complexity; the sequence is PSAASTASPSTSAATRTRPRGGT. 2 stretches are compositionally biased toward polar residues: residues 234 to 246 and 253 to 264; these read NASQ…TSFG and LSSSRSQYSLRP. 2 stretches are compositionally biased toward basic residues: residues 287-303 and 404-422; these read AVKK…KKSS and HLKK…HLAK. Residues 425–434 show a composition bias toward basic and acidic residues; the sequence is KPGEDADSAR. Residues 500 to 525 show a composition bias toward polar residues; that stretch reads PSPSQTPIAERQTSVTSTVESPSHAS. Residues 534–555 are compositionally biased toward low complexity; that stretch reads SLRTPSRTTASTSTSSASTVLS. A compositionally biased stretch (basic and acidic residues) spans 630–640; it reads TDSELSDRKDS. A compositionally biased stretch (polar residues) spans 641 to 660; sequence VVSTHSMRSNHSGISPKTSY. Residues 754 to 763 show a composition bias toward acidic residues; the sequence is VGEEEDDDDD. Low complexity-rich tracts occupy residues 780 to 791 and 854 to 870; these read SSSGISSTHASS and ALVQ…QPSP. Polar residues predominate over residues 913–935; the sequence is RPNTAGSVGATRPSTTTLGSTLS. The region spanning 970–1072 is the Ras-associating domain; that stretch reads RNHFIRVYKT…LRFVFRPDSV (103 aa). LRR repeat units follow at residues 1086–1107, 1110–1132, 1134–1155, 1157–1178, 1181–1202, 1204–1225, 1227–1248, 1250–1271, 1273–1294, 1295–1316, 1317–1336, 1339–1360, 1363–1385, 1386–1407, 1409–1430, 1432–1453, 1511–1534, 1535–1556, 1559–1580, 1583–1605, 1606–1628, and 1635–1654; these read TFQH…LYKH, WIVS…VQLC, SLRT…VRHS, TLTH…SLDL, ELMS…FSSI, TLRN…ICDV, SLVD…IANL, NLER…MSEL, SLRT…LGLP, RLQN…LGPQ, LTQV…AALT, DLTS…LFPQ, ALVK…GDLK, RLEM…IGDL, ALKE…LWLC, SLAH…PDIR, SLQK…SELT, SLEV…SLQT, KLRE…DLVV, ELRI…GKLK, KLAN…HYDW, and ELRY…TKLS. In terms of domain architecture, PPM-type phosphatase spans 1710–2000; that stretch reads AYGIADALGK…ESIMVMVISV (291 aa). In terms of domain architecture, Guanylate cyclase spans 2058–2194; the sequence is ALVFTDIKNS…PMVNRAARIS (137 aa). Asp-2063 and Asp-2105 together coordinate Mg(2+). Disordered regions lie at residues 2220–2241, 2354–2378, and 2467–2493; these read DESS…TEEE, EADR…HGTA, and PPRA…ELVP. Over residues 2470–2485 the composition is skewed to polar residues; sequence ASTSALSLPSPRTSPR.

It belongs to the adenylyl cyclase class-3 family. Requires Mg(2+) as cofactor.

The enzyme catalyses ATP = 3',5'-cyclic AMP + diphosphate. Plays essential roles in regulation of cellular metabolism by catalyzing the synthesis of a second messenger, cAMP. This chain is Adenylate cyclase (UAC1), found in Mycosarcoma maydis (Corn smut fungus).